We begin with the raw amino-acid sequence, 117 residues long: Large ribosomal subunit protein bL19 (117 aa).

Belongs to the bacterial ribosomal protein bL19 family.

In terms of biological role, this protein is located at the 30S-50S ribosomal subunit interface and may play a role in the structure and function of the aminoacyl-tRNA binding site. The protein is Large ribosomal subunit protein bL19 of Shewanella amazonensis (strain ATCC BAA-1098 / SB2B).